The primary structure comprises 173 residues: GTP-dependent dephospho-CoA kinase (173 aa).

The GTP site is built by Asp-52, Val-53, Val-54, Asp-71, Lys-73, and Asp-122.

The protein belongs to the GTP-dependent DPCK family.

It catalyses the reaction 3'-dephospho-CoA + GTP = GDP + CoA + H(+). It participates in cofactor biosynthesis; coenzyme A biosynthesis. Functionally, catalyzes the GTP-dependent phosphorylation of the 3'-hydroxyl group of dephosphocoenzyme A to form coenzyme A (CoA). This Metallosphaera sedula (strain ATCC 51363 / DSM 5348 / JCM 9185 / NBRC 15509 / TH2) protein is GTP-dependent dephospho-CoA kinase.